We begin with the raw amino-acid sequence, 384 residues long: Probable circularly permuted 1,3-beta-glucanase PGA52 (384 aa).

An N-terminal signal peptide occupies residues 1-17 (MLFSSLLVSTLVSVATA). N-linked (GlcNAc...) asparagine glycosylation is found at N118, N128, N170, N210, and N244. An ExDxxE motif motif is present at residues 254–259 (EFDIFE). N262 and N318 each carry an N-linked (GlcNAc...) asparagine glycan. S361 carries the GPI-anchor amidated serine lipid modification. Positions 362 to 384 (GGVSYQPSFITNLLMTVLTLWVI) are cleaved as a propeptide — removed in mature form.

It belongs to the PGA52 family.

Its subcellular location is the cell membrane. It carries out the reaction Hydrolysis of (1-&gt;3)-beta-D-glucosidic linkages in (1-&gt;3)-beta-D-glucans.. In terms of biological role, probable circularly permuted 1,3-beta-glucanase involved in cell wall modification through beta-1,3-glucan network alterations such as increased branching or remodeling. The sequence is that of Probable circularly permuted 1,3-beta-glucanase PGA52 (PGA52) from Candida albicans (strain SC5314 / ATCC MYA-2876) (Yeast).